The chain runs to 137 residues: Large ribosomal subunit protein mL61 (137 aa).

The protein belongs to the mitochondrion-specific ribosomal protein mL61 family. As to quaternary structure, component of the mitochondrial large ribosomal subunit (mt-LSU). Mature yeast 74S mitochondrial ribosomes consist of a small (37S) and a large (54S) subunit. The 37S small subunit contains a 15S ribosomal RNA (15S mt-rRNA) and 34 different proteins. The 54S large subunit contains a 21S rRNA (21S mt-rRNA) and 46 different proteins.

It is found in the mitochondrion. Its function is as follows. Component of the mitochondrial ribosome (mitoribosome), a dedicated translation machinery responsible for the synthesis of mitochondrial genome-encoded proteins, including at least some of the essential transmembrane subunits of the mitochondrial respiratory chain. The mitoribosomes are attached to the mitochondrial inner membrane and translation products are cotranslationally integrated into the membrane. mL61 is not essential in cells grown at 30 degrees Celsius but is required for mitochondrial translation in cells grown at 18 degrees Celsius. The protein is Large ribosomal subunit protein mL61 (MRP49) of Saccharomyces cerevisiae (strain ATCC 204508 / S288c) (Baker's yeast).